Consider the following 307-residue polypeptide: 4-diphosphocytidyl-2-C-methyl-D-erythritol kinase (307 aa).

Lysine 16 is a catalytic residue. 101-111 is an ATP binding site; that stretch reads PVAGGMAGGSA. Aspartate 143 is a catalytic residue.

The protein belongs to the GHMP kinase family. IspE subfamily.

It catalyses the reaction 4-CDP-2-C-methyl-D-erythritol + ATP = 4-CDP-2-C-methyl-D-erythritol 2-phosphate + ADP + H(+). It functions in the pathway isoprenoid biosynthesis; isopentenyl diphosphate biosynthesis via DXP pathway; isopentenyl diphosphate from 1-deoxy-D-xylulose 5-phosphate: step 3/6. Catalyzes the phosphorylation of the position 2 hydroxy group of 4-diphosphocytidyl-2C-methyl-D-erythritol. In Nocardia farcinica (strain IFM 10152), this protein is 4-diphosphocytidyl-2-C-methyl-D-erythritol kinase.